Reading from the N-terminus, the 678-residue chain is Methionine--tRNA ligase (678 aa).

A 'HIGH' region motif is present at residues 14–24 (PYANGSIHLGH). Residues Cys145, Cys148, Cys158, and Cys161 each coordinate Zn(2+). Positions 331–335 (KMSKS) match the 'KMSKS' region motif. Lys334 is an ATP binding site. Positions 576–678 (AFAAVDLRIA…SGAKPGQRVK (103 aa)) constitute a tRNA-binding domain.

It belongs to the class-I aminoacyl-tRNA synthetase family. MetG type 1 subfamily. As to quaternary structure, homodimer. Requires Zn(2+) as cofactor.

It localises to the cytoplasm. It carries out the reaction tRNA(Met) + L-methionine + ATP = L-methionyl-tRNA(Met) + AMP + diphosphate. Is required not only for elongation of protein synthesis but also for the initiation of all mRNA translation through initiator tRNA(fMet) aminoacylation. The chain is Methionine--tRNA ligase from Ectopseudomonas mendocina (strain ymp) (Pseudomonas mendocina).